Reading from the N-terminus, the 243-residue chain is Probable transcriptional regulatory protein BPP2422 (243 aa).

The tract at residues 1 to 21 (MAGHSKWANIQHRKGRQDAKR) is disordered.

This sequence belongs to the TACO1 family.

It localises to the cytoplasm. In Bordetella parapertussis (strain 12822 / ATCC BAA-587 / NCTC 13253), this protein is Probable transcriptional regulatory protein BPP2422.